A 391-amino-acid polypeptide reads, in one-letter code: Multidrug resistance protein MdtL (391 aa).

At 1 to 3 the chain is on the cytoplasmic side; it reads MSR. Residues 4–24 traverse the membrane as a helical segment; the sequence is FLICSFALVLLYPAGIDMYLV. The Periplasmic portion of the chain corresponds to 25–41; that stretch reads GLPRIAADLNASEAQLH. The chain crosses the membrane as a helical span at residues 42-62; the sequence is IAFSVYLAGMAAAMLFAGKVA. The Cytoplasmic portion of the chain corresponds to 63 to 68; sequence DRSGRK. The chain crosses the membrane as a helical span at residues 69–89; sequence PVAIPGAALFIIASVFCSLAE. Over 90 to 92 the chain is Periplasmic; that stretch reads TST. Residues 93–113 traverse the membrane as a helical segment; sequence LFLAGRFLQGLGAGCCYVVAF. Residues 114–130 lie on the Cytoplasmic side of the membrane; the sequence is AILRDTLDDRRRAKVLS. The helical transmembrane segment at 131-151 threads the bilayer; it reads LLNGITCIIPVLAPVLGHLIM. Over 152 to 157 the chain is Periplasmic; the sequence is LKFPWQ. Residues 158–178 traverse the membrane as a helical segment; that stretch reads SLFWTMAIMGIAVLMLSLFIL. Topologically, residues 179–198 are cytoplasmic; it reads KETRPAAPAASDKSRENSES. The chain crosses the membrane as a helical span at residues 199–221; that stretch reads LLNRFFLSRVVITTLSVSVILTF. Topologically, residues 222–244 are periplasmic; that stretch reads VNTSPVLLMEIMGFERGEYATIM. The helical transmembrane segment at 245 to 265 threads the bilayer; the sequence is ALTAGVSMTVSFSTPFALGIF. At 266–268 the chain is on the cytoplasmic side; it reads KPR. A helical membrane pass occupies residues 269–289; the sequence is TLMITSQVLFLAAGITLAVSP. Residues 290 to 292 lie on the Periplasmic side of the membrane; the sequence is SHA. Residues 293 to 313 traverse the membrane as a helical segment; the sequence is ISLFGITLICAGFSVGFGVAM. Residues 314-330 are Cytoplasmic-facing; it reads SQALGPFSLRAGVASST. Residues 331 to 351 form a helical membrane-spanning segment; it reads LGIAQVCGSSLWIWLAAVVGI. The Periplasmic portion of the chain corresponds to 352 to 355; sequence GAWN. Residues 356–376 form a helical membrane-spanning segment; that stretch reads MLIGILIACSIVSLLLIMFVA. Residues 377–391 lie on the Cytoplasmic side of the membrane; it reads PGRPVAAHEEIHHHA.

The protein belongs to the major facilitator superfamily. DHA1 family. MdtL (TC 2.A.1.2.22) subfamily.

The protein localises to the cell inner membrane. This chain is Multidrug resistance protein MdtL, found in Shigella dysenteriae serotype 1 (strain Sd197).